The following is an 891-amino-acid chain: DNA mismatch repair protein MutS (891 aa).

ATP is bound at residue 634-641 (GPNMGGKS).

Belongs to the DNA mismatch repair MutS family.

In terms of biological role, this protein is involved in the repair of mismatches in DNA. It is possible that it carries out the mismatch recognition step. This protein has a weak ATPase activity. This chain is DNA mismatch repair protein MutS, found in Burkholderia pseudomallei (strain 1106a).